An 85-amino-acid chain; its full sequence is Large ribosomal subunit protein bL27 (85 aa).

A disordered region spans residues 1–22; it reads MAHKKAGGSTKNGRDSESKRLG.

Belongs to the bacterial ribosomal protein bL27 family.

The chain is Large ribosomal subunit protein bL27 from Idiomarina loihiensis (strain ATCC BAA-735 / DSM 15497 / L2-TR).